A 432-amino-acid chain; its full sequence is Lysosomal acid phosphatase (432 aa).

The signal sequence occupies residues 1-32 (MADGSCLGSGPQLGLIALLVVLLFSAVPLAQS). Topologically, residues 33-384 (RELRFVTLVY…TTSFIMTEET (352 aa)) are lumenal. H44 (nucleophile) is an active-site residue. N-linked (GlcNAc...) asparagine glycosylation is found at N94, N135, N179, N193, and N269. 3 cysteine pairs are disulfide-bonded: C161-C373, C214-C313, and C348-C352. The Proton donor role is filled by D290. N-linked (GlcNAc...) asparagine glycosylation is found at N325 and N334. The chain crosses the membrane as a helical span at residues 385–405 (IIGLTIGAIALFIIIVVLMLL). Topologically, residues 406–432 (SCNEPKDDGYQHVSDEGDDHETKGLAM) are cytoplasmic.

It belongs to the histidine acid phosphatase family. The membrane-bound form is converted to the soluble form by sequential proteolytic processing. First, the C-terminal cytoplasmic tail is removed. Cleavage by a lysosomal protease releases the soluble form in the lysosome lumen.

The protein localises to the lysosome membrane. It localises to the lysosome lumen. The catalysed reaction is a phosphate monoester + H2O = an alcohol + phosphate. This is Lysosomal acid phosphatase (acp2) from Xenopus laevis (African clawed frog).